The following is a 129-amino-acid chain: Tumor necrosis factor receptor superfamily member 12A (129 aa).

Positions 1-27 (MARGSLRRLLRLLVLGLWLALLRSVAG) are cleaved as a signal peptide. Residues 28–80 (EQAPGTAPCSRGSSWSADLDKCMDCASCRARPHSDFCLGCAAAPPAPFRLLWP) are Extracellular-facing. 3 cysteine pairs are disulfide-bonded: C36–C49, C52–C67, and C55–C64. The TNFR-Cys; atypical repeat unit spans residues 36–67 (CSRGSSWSADLDKCMDCASCRARPHSDFCLGC). A helical transmembrane segment spans residues 81 to 101 (ILGGALSLTFVLGLLSGFLVW). Residues 102–129 (RRCRRREKFTTPIEETGGEGCPAVALIQ) lie on the Cytoplasmic side of the membrane.

Associates with TRAF1 and TRAF2, and probably also with TRAF3. Highly expressed in heart, placenta and kidney. Intermediate expression in lung, skeletal muscle and pancreas.

It is found in the membrane. In terms of biological role, receptor for TNFSF12/TWEAK. Weak inducer of apoptosis in some cell types. Promotes angiogenesis and the proliferation of endothelial cells. May modulate cellular adhesion to matrix proteins. The polypeptide is Tumor necrosis factor receptor superfamily member 12A (TNFRSF12A) (Homo sapiens (Human)).